Reading from the N-terminus, the 395-residue chain is Digeranylgeranylglycerophospholipid reductase (395 aa).

A15, D34, C45, A46, G48, R97, A121, D276, and G288 together coordinate FAD. R329 and G365 together coordinate a 2,3-bis-O-(geranylgeranyl)-sn-glycerol 1-phospholipid.

This sequence belongs to the geranylgeranyl reductase family. DGGGPL reductase subfamily. FAD is required as a cofactor.

The catalysed reaction is a 2,3-bis-O-phytanyl-sn-glycerol 1-phospholipid + 8 A = a 2,3-bis-O-(geranylgeranyl)-sn-glycerol 1-phospholipid + 8 AH2. It carries out the reaction 2,3-bis-O-(phytanyl)-sn-glycerol 1-phosphate + 8 A = 2,3-bis-O-(geranylgeranyl)-sn-glycerol 1-phosphate + 8 AH2. The enzyme catalyses CDP-2,3-bis-O-(geranylgeranyl)-sn-glycerol + 8 AH2 = CDP-2,3-bis-O-(phytanyl)-sn-glycerol + 8 A. It catalyses the reaction archaetidylserine + 8 AH2 = 2,3-bis-O-phytanyl-sn-glycero-3-phospho-L-serine + 8 A. The protein operates within membrane lipid metabolism; glycerophospholipid metabolism. Its function is as follows. Is involved in the reduction of 2,3-digeranylgeranylglycerophospholipids (unsaturated archaeols) into 2,3-diphytanylglycerophospholipids (saturated archaeols) in the biosynthesis of archaeal membrane lipids. Catalyzes the formation of archaetidic acid (2,3-di-O-phytanyl-sn-glyceryl phosphate) from 2,3-di-O-geranylgeranylglyceryl phosphate (DGGGP) via the hydrogenation of each double bond of the isoprenoid chains. Is also probably able to reduce double bonds of geranyl groups in CDP-2,3-bis-O-(geranylgeranyl)-sn-glycerol and archaetidylserine, thus acting at various stages in the biosynthesis of archaeal membrane lipids. This Thermococcus gammatolerans (strain DSM 15229 / JCM 11827 / EJ3) protein is Digeranylgeranylglycerophospholipid reductase.